Consider the following 213-residue polypeptide: Octanoyltransferase (213 aa).

Residues 32–207 (DHTPDEIWLV…KLLALLNNPP (176 aa)) form the BPL/LPL catalytic domain. Substrate is bound by residues 71–78 (RGGQVTYH), 138–140 (SLG), and 151–153 (GLA). The active-site Acyl-thioester intermediate is the Cys169.

This sequence belongs to the LipB family.

The protein localises to the cytoplasm. The enzyme catalyses octanoyl-[ACP] + L-lysyl-[protein] = N(6)-octanoyl-L-lysyl-[protein] + holo-[ACP] + H(+). It functions in the pathway protein modification; protein lipoylation via endogenous pathway; protein N(6)-(lipoyl)lysine from octanoyl-[acyl-carrier-protein]: step 1/2. Catalyzes the transfer of endogenously produced octanoic acid from octanoyl-acyl-carrier-protein onto the lipoyl domains of lipoate-dependent enzymes. Lipoyl-ACP can also act as a substrate although octanoyl-ACP is likely to be the physiological substrate. The polypeptide is Octanoyltransferase (Enterobacter sp. (strain 638)).